We begin with the raw amino-acid sequence, 89 residues long: Small ribosomal subunit protein uS15 (89 aa).

The protein belongs to the universal ribosomal protein uS15 family. As to quaternary structure, part of the 30S ribosomal subunit. Forms a bridge to the 50S subunit in the 70S ribosome, contacting the 23S rRNA.

Functionally, one of the primary rRNA binding proteins, it binds directly to 16S rRNA where it helps nucleate assembly of the platform of the 30S subunit by binding and bridging several RNA helices of the 16S rRNA. Its function is as follows. Forms an intersubunit bridge (bridge B4) with the 23S rRNA of the 50S subunit in the ribosome. This Vibrio atlanticus (strain LGP32) (Vibrio splendidus (strain Mel32)) protein is Small ribosomal subunit protein uS15.